Consider the following 367-residue polypeptide: (E)-2-epi-beta-caryophyllene synthase (367 aa).

Mg(2+) contacts are provided by Asp93, Asn234, and Ser238. The DDXXE motif motif lies at 93–97 (DDIAE).

Belongs to the terpene synthase family. Mg(2+) serves as cofactor. It depends on Mn(2+) as a cofactor.

The enzyme catalyses (2E,6E)-farnesyl diphosphate = (E)-2-epi-beta-caryophyllene + diphosphate. Its pathway is secondary metabolite biosynthesis; terpenoid biosynthesis. In terms of biological role, sesquiterpene synthase converting farnesyl diphosphate to (E)-2-epi-beta-caryophyllene as the major product, and to two other unidentified sesquiterpenes. Has no diterpene synthase activity. The protein is (E)-2-epi-beta-caryophyllene synthase of Selaginella moellendorffii (Spikemoss).